The primary structure comprises 118 residues: Cycloviolacin-O8 (118 aa).

The first 22 residues, 1 to 22 (MEMKNMVVGLFLIAAFALPALA), serve as a signal peptide directing secretion. A propeptide spanning residues 23-84 (TNFEKDFITH…THSNSINALG (62 aa)) is cleaved from the precursor. A cross-link (cyclopeptide (Gly-Asn)) is located at residues 85–115 (GTLPCGESCVWIPCISSVVGCSCKSKVCYKN). Cystine bridges form between cysteine 89-cysteine 105, cysteine 93-cysteine 107, and cysteine 98-cysteine 112. Positions 116–118 (SLA) are excised as a propeptide.

Cycloviolacin-O8 is a cyclic peptide. In terms of tissue distribution, expressed in leaves, petals, petioles and roots but not in runners (at protein level).

Probably participates in a plant defense mechanism. The protein is Cycloviolacin-O8 (Voc1) of Viola odorata (Sweet violet).